We begin with the raw amino-acid sequence, 176 residues long: Insulin-like growth factor 1 (176 aa).

The tract at residues 45 to 73 (GPETLCGAELVDTLQFVCGERGFYFSKPT) is b. Cystine bridges form between Cys-50–Cys-92, Cys-62–Cys-105, and Cys-91–Cys-96. The tract at residues 74–85 (GYGPSSRRSHNR) is c. The segment at 86-106 (GIVDECCFQSCELRRLEMYCA) is a. The segment at 107-114 (PVKSGKAA) is d. Positions 115-176 (RSVRAQRHTD…GNTGGRNYRM (62 aa)) are cleaved as a propeptide — e peptide. The segment at 115–176 (RSVRAQRHTD…GNTGGRNYRM (62 aa)) is disordered. Residues 140-161 (RGTERRTAQHPDKTKPKKEVHQ) show a composition bias toward basic and acidic residues.

This sequence belongs to the insulin family.

It localises to the secreted. The insulin-like growth factors, isolated from plasma, are structurally and functionally related to insulin but have a much higher growth-promoting activity. Acts as a ligand for IGF1R. Binds to the alpha subunit of IGF1R, leading to the activation of the intrinsic tyrosine kinase activity which autophosphorylates tyrosine residues in the beta subunit thus initiatiating a cascade of down-stream signaling events leading to activation of the PI3K-AKT/PKB and the Ras-MAPK pathways. Binds to integrins. Its binding to integrins and subsequent ternary complex formation with integrins and IGFR1 are essential for IGF1 signaling. The polypeptide is Insulin-like growth factor 1 (Oncorhynchus mykiss (Rainbow trout)).